Reading from the N-terminus, the 126-residue chain is uncharacterized protein (126 aa).

At 1–28 (MAGEAVSEHTPDSQEVTVTSVVCCLDSV) the chain is on the cytoplasmic side. Residues 29–49 (VEIGHHVVYSVVTPLIVAVLI) traverse the membrane as a helical segment. Residues 50 to 75 (DTMAGEAVLEHTSDSQEEIVTTVVCS) are Extracellular-facing. The helical transmembrane segment at 76-96 (VVPLVCFVVSVVCFVISVVEI) threads the bilayer. Position 97 (Gly-97) is a topological domain, cytoplasmic. A helical membrane pass occupies residues 98–118 (HHVVYSVVAPLTVTVAVETIA). The Extracellular segment spans residues 119–126 (EEMDSVHT).

It is found in the membrane. This is an uncharacterized protein from Saccharomyces cerevisiae (strain ATCC 204508 / S288c) (Baker's yeast).